The chain runs to 461 residues: Ribulose bisphosphate carboxylase (461 aa).

Asn112 is a substrate binding site. Lys167 serves as the catalytic Proton acceptor. Lys169 provides a ligand contact to substrate. Mg(2+)-binding residues include Lys192, Asp194, and Glu195. Lys192 is subject to N6-carboxylysine. His288 acts as the Proton acceptor in catalysis. Residues Arg289, His322, and Ser369 each contribute to the substrate site.

Belongs to the RuBisCO large chain family. Type II subfamily. Homodimer. Requires Mg(2+) as cofactor.

It catalyses the reaction 2 (2R)-3-phosphoglycerate + 2 H(+) = D-ribulose 1,5-bisphosphate + CO2 + H2O. The enzyme catalyses D-ribulose 1,5-bisphosphate + O2 = 2-phosphoglycolate + (2R)-3-phosphoglycerate + 2 H(+). Its function is as follows. RuBisCO catalyzes two reactions: the carboxylation of D-ribulose 1,5-bisphosphate, the primary event in carbon dioxide fixation, as well as the oxidative fragmentation of the pentose substrate. Both reactions occur simultaneously and in competition at the same active site. In Rhodopseudomonas palustris (strain BisB18), this protein is Ribulose bisphosphate carboxylase.